The chain runs to 211 residues: Ribonuclease HII (211 aa).

The RNase H type-2 domain maps to 17–211 (FLSAGVDEVG…CQPSLFEVRS (195 aa)). A divalent metal cation is bound by residues D23, E24, and D119.

This sequence belongs to the RNase HII family. The cofactor is Mn(2+). Mg(2+) is required as a cofactor.

It is found in the cytoplasm. It carries out the reaction Endonucleolytic cleavage to 5'-phosphomonoester.. Endonuclease that specifically degrades the RNA of RNA-DNA hybrids. This chain is Ribonuclease HII, found in Trichodesmium erythraeum (strain IMS101).